The sequence spans 422 residues: Glutamate-1-semialdehyde 2,1-aminomutase (422 aa).

Position 265 is an N6-(pyridoxal phosphate)lysine (Lys265).

Belongs to the class-III pyridoxal-phosphate-dependent aminotransferase family. HemL subfamily. The cofactor is pyridoxal 5'-phosphate.

It is found in the cytoplasm. The enzyme catalyses (S)-4-amino-5-oxopentanoate = 5-aminolevulinate. The protein operates within porphyrin-containing compound metabolism; protoporphyrin-IX biosynthesis; 5-aminolevulinate from L-glutamyl-tRNA(Glu): step 2/2. The protein is Glutamate-1-semialdehyde 2,1-aminomutase of Methanococcoides burtonii (strain DSM 6242 / NBRC 107633 / OCM 468 / ACE-M).